Reading from the N-terminus, the 473-residue chain is MKSILDGLADTTFRTITTDLLYVGSNDIQYEDIKGDMASKLGYFPQKFPLTSFRGSPFQEKMTAGDNSPLVPAGDTTNITEFYNKSLSSFKENEENIQCGENFMDMECFMILNPSQQLAIAVLSLTLGTFTVLENLLVLCVILHSRSLRCRPSYHFIGSLAVADLLGSVIFVYSFVDFHVFHRKDSPNVFLFKLGGVTASFTASVGSLFLTAIDRYISIHRPLAYKRIVTRPKAVVAFCLMWTIAIVIAVLPLLGWNCKKLQSVCSDIFPLIDETYLMFWIGVTSVLLLFIVYAYMYILWKAHSHAVRMIQRGTQKSIIIHTSEDGKVQVTRPDQARMDIRLAKTLVLILVVLIICWGPLLAIMVYDVFGKMNKLIKTVFAFCSMLCLLNSTVNPIIYALRSKDLRHAFRSMFPSCEGTAQPLDNSMGDSDCLHKHANNTASMHRAAESCIKSTVKIAKVTMSVSTDTSAEAL.

The Extracellular segment spans residues 1-117; it reads MKSILDGLAD…CFMILNPSQQ (117 aa). The segment at 2 to 23 is required for mitochondrial localization; that stretch reads KSILDGLADTTFRTITTDLLYV. N-linked (GlcNAc...) asparagine glycans are attached at residues asparagine 78 and asparagine 84. A helical membrane pass occupies residues 118-143; that stretch reads LAIAVLSLTLGTFTVLENLLVLCVIL. Over 144–155 the chain is Cytoplasmic; the sequence is HSRSLRCRPSYH. A helical membrane pass occupies residues 156–176; sequence FIGSLAVADLLGSVIFVYSFV. At 177-188 the chain is on the extracellular side; sequence DFHVFHRKDSPN. Residues 189–213 form a helical membrane-spanning segment; it reads VFLFKLGGVTASFTASVGSLFLTAI. The Cytoplasmic segment spans residues 214-233; that stretch reads DRYISIHRPLAYKRIVTRPK. The helical transmembrane segment at 234–256 threads the bilayer; the sequence is AVVAFCLMWTIAIVIAVLPLLGW. Residues 257-274 are Extracellular-facing; sequence NCKKLQSVCSDIFPLIDE. Residues 275–300 form a helical membrane-spanning segment; sequence TYLMFWIGVTSVLLLFIVYAYMYILW. Over 301-345 the chain is Cytoplasmic; sequence KAHSHAVRMIQRGTQKSIIIHTSEDGKVQVTRPDQARMDIRLAKT. Residues 346 to 366 traverse the membrane as a helical segment; sequence LVLILVVLIICWGPLLAIMVY. Over 367–378 the chain is Extracellular; sequence DVFGKMNKLIKT. The helical transmembrane segment at 379–400 threads the bilayer; sequence VFAFCSMLCLLNSTVNPIIYAL. Over 401–473 the chain is Cytoplasmic; that stretch reads RSKDLRHAFR…VSTDTSAEAL (73 aa). Cysteine 416 carries the S-palmitoyl cysteine lipid modification. Phosphoserine is present on residues serine 426 and serine 430.

This sequence belongs to the G-protein coupled receptor 1 family. As to quaternary structure, interacts (via C-terminus) with CNRIP1. Associates with G protein alpha subunits, including G(i) alpha-1/GNAI1, G(i) alpha-3/GNAI3 and G(o)-alpha/GNAO1; palmitoylation is important for interaction with GNAI3 and GNAO1. Post-translationally, palmitoylation at Cys-416 is important for recruitment at both plasma membrane and lipid rafts and association with G protein alpha subunits. As to expression, expressed in the brain, in the striatum, medial septum, descending arm of the band of Broca, the amygdaloid nucleus, the hippocampus and cortex (at protein level). High levels in the lateral striatum. In rostral brain regions, high expression levels in the dorsal lateral striatum, while in the caudal brain regions, high levels are observed in the ventral lateral striatum. Expressed in monocytes/macrophages (at protein level). Expressed in striated muscles and in vascular smooth muscles cells (at protein level).

Its subcellular location is the cell membrane. The protein localises to the mitochondrion outer membrane. The protein resides in the cell projection. It localises to the axon. It is found in the presynapse. With respect to regulation, hemopressin, a peptide derived from hemoglobin subunit alpha (HBA1 and/or HBA2), acts as an antagonist peptide: hemopressin-binding efficiently blocks cannabinoid receptor CNR1 and subsequent signaling. Its function is as follows. G-protein coupled receptor for cannabinoids, including endocannabinoids (eCBs), such as N-arachidonoylethanolamide (also called anandamide or AEA) and 2-arachidonoylglycerol (2-AG). Mediates many cannabinoid-induced effects, acting, among others, on food intake, memory loss, gastrointestinal motility, catalepsy, ambulatory activity, anxiety, chronic pain. Signaling typically involves reduction in cyclic AMP. In the hypothalamus, may have a dual effect on mitochondrial respiration depending upon the agonist dose and possibly upon the cell type. Increases respiration at low doses, while decreases respiration at high doses. At high doses, CNR1 signal transduction involves G-protein alpha-i protein activation and subsequent inhibition of mitochondrial soluble adenylate cyclase, decrease in cyclic AMP concentration, inhibition of protein kinase A (PKA)-dependent phosphorylation of specific subunits of the mitochondrial electron transport system, including NDUFS2. In the hypothalamus, inhibits leptin-induced reactive oxygen species (ROS) formation and mediates cannabinoid-induced increase in SREBF1 and FASN gene expression. In response to cannabinoids, drives the release of orexigenic beta-endorphin, but not that of melanocyte-stimulating hormone alpha/alpha-MSH, from hypothalamic POMC neurons, hence promoting food intake. In the hippocampus, regulates cellular respiration and energy production in response to cannabinoids. Involved in cannabinoid-dependent depolarization-induced suppression of inhibition (DSI), a process in which depolarization of CA1 postsynaptic pyramidal neurons mobilizes eCBs, which retrogradely activate presynaptic CB1 receptors, transiently decreasing GABAergic inhibitory neurotransmission. Also reduces excitatory synaptic transmission. In superior cervical ganglions and cerebral vascular smooth muscle cells, inhibits voltage-gated Ca(2+) channels in a constitutive, as well as agonist-dependent manner. Induces leptin production in adipocytes and reduces LRP2-mediated leptin clearance in the kidney, hence participating in hyperleptinemia. In adipose tissue, CNR1 signaling leads to increased expression of SREBF1, ACACA and FASN genes. In the liver, activation by endocannabinoids leads to increased de novo lipogenesis and reduced fatty acid catabolism, associated with increased expression of SREBF1/SREBP-1, GCK, ACACA, ACACB and FASN genes. May also affect de novo cholesterol synthesis and HDL-cholesteryl ether uptake. Peripherally modulates energy metabolism. In high carbohydrate diet-induced obesity, may decrease the expression of mitochondrial dihydrolipoyl dehydrogenase/DLD in striated muscles, as well as that of selected glucose/ pyruvate metabolic enzymes, hence affecting energy expenditure through mitochondrial metabolism. In response to cannabinoid anandamide, elicits a pro-inflammatory response in macrophages, which involves NLRP3 inflammasome activation and IL1B and IL18 secretion. In macrophages infiltrating pancreatic islets, this process may participate in the progression of type-2 diabetes and associated loss of pancreatic beta-cells. This Rattus norvegicus (Rat) protein is Cannabinoid receptor 1 (Cnr1).